The chain runs to 301 residues: Phosphonates import ATP-binding protein PhnC (301 aa).

The region spanning Ile8–Ala256 is the ABC transporter domain. ATP is bound at residue Gly41–Ser48. A disordered region spans residues Ala264–Ala287.

Belongs to the ABC transporter superfamily. Phosphonates importer (TC 3.A.1.9.1) family. The complex is composed of two ATP-binding proteins (PhnC), two transmembrane proteins (PhnE) and a solute-binding protein (PhnD).

The protein localises to the cell inner membrane. The enzyme catalyses phosphonate(out) + ATP + H2O = phosphonate(in) + ADP + phosphate + H(+). Functionally, part of the ABC transporter complex PhnCDE involved in phosphonates import. Responsible for energy coupling to the transport system. The sequence is that of Phosphonates import ATP-binding protein PhnC from Paraburkholderia xenovorans (strain LB400).